A 189-amino-acid chain; its full sequence is Ion-translocating oxidoreductase complex subunit B (189 aa).

The tract at residues 1–26 (MSAIVIAIVVLTILALVFGVLLGFAA) is hydrophobic. One can recognise a 4Fe-4S domain in the interval 32-90 (EGNPLTDQIEALLPQTQCGQCGYPGCRPYAEAIANGDKVNKCPPGGAATMEKLADLMGV). [4Fe-4S] cluster is bound by residues cysteine 49, cysteine 52, cysteine 57, cysteine 73, cysteine 114, cysteine 117, cysteine 120, cysteine 124, cysteine 144, cysteine 147, cysteine 150, and cysteine 154. 4Fe-4S ferredoxin-type domains follow at residues 105–134 (KVAY…GSGK) and 135–164 (LMHT…MLPV).

This sequence belongs to the 4Fe4S bacterial-type ferredoxin family. RnfB subfamily. The complex is composed of six subunits: RnfA, RnfB, RnfC, RnfD, RnfE and RnfG. [4Fe-4S] cluster serves as cofactor.

It is found in the cell inner membrane. Part of a membrane-bound complex that couples electron transfer with translocation of ions across the membrane. In Shewanella pealeana (strain ATCC 700345 / ANG-SQ1), this protein is Ion-translocating oxidoreductase complex subunit B.